Consider the following 229-residue polypeptide: Transmembrane emp24 domain-containing protein 5 (229 aa).

A signal peptide spans 1-27 (MGDKIWLPFPVLLLAALPPVLLPGAAG). The Lumenal portion of the chain corresponds to 28 to 196 (FTPSLDSDFT…IQESNFDRVN (169 aa)). The GOLD domain maps to 45 to 126 (KECFYQPMPL…EKVIFFELIL (82 aa)). The chain crosses the membrane as a helical span at residues 197 to 217 (FWSMVNLVVMVVVSAIQVYML). The Cytoplasmic segment spans residues 218-229 (KSLFEDKRKSRT).

This sequence belongs to the EMP24/GP25L family. In terms of assembly, interacts with TMED9 and TMED10.

Its subcellular location is the endoplasmic reticulum membrane. It is found in the golgi apparatus. It localises to the cis-Golgi network membrane. The protein resides in the endoplasmic reticulum-Golgi intermediate compartment membrane. In terms of biological role, potential role in vesicular protein trafficking, mainly in the early secretory pathway. Required for the maintenance of the Golgi apparatus; involved in protein exchange between Golgi stacks during assembly. Probably not required for COPI-vesicle-mediated retrograde transport. This Homo sapiens (Human) protein is Transmembrane emp24 domain-containing protein 5 (TMED5).